We begin with the raw amino-acid sequence, 99 residues long: MELAVVGSSEFVTGFRLAGIKKIYEAKSDELESVVTKVLKDSDVGIFVIHEDDFNKLPEILRDTLSESVDPTVVTLGGTGESSNLREKIKQSVGVDLWK.

It belongs to the V-ATPase F subunit family. As to quaternary structure, has multiple subunits with at least A(3), B(3), C, D, E, F, H, I and proteolipid K(x).

Its subcellular location is the cell membrane. In terms of biological role, component of the A-type ATP synthase that produces ATP from ADP in the presence of a proton gradient across the membrane. The protein is A-type ATP synthase subunit F of Methanococcoides burtonii (strain DSM 6242 / NBRC 107633 / OCM 468 / ACE-M).